A 202-amino-acid chain; its full sequence is uncharacterized protein (202 aa).

This is an uncharacterized protein from Homo sapiens (Human).